We begin with the raw amino-acid sequence, 454 residues long: tRNA modification GTPase MnmE (454 aa).

Residues arginine 23, glutamate 80, and lysine 120 each coordinate (6S)-5-formyl-5,6,7,8-tetrahydrofolate. The region spanning 216-377 (GMKVVIAGRP…LRNHLKQSMG (162 aa)) is the TrmE-type G domain. A K(+)-binding site is contributed by asparagine 226. Residues 226-231 (NAGKSS), 245-251 (TDIAGTT), 270-273 (DTAG), 335-338 (NKAD), and 358-360 (SAR) contribute to the GTP site. Serine 230 lines the Mg(2+) pocket. K(+)-binding residues include threonine 245, isoleucine 247, and threonine 250. Threonine 251 lines the Mg(2+) pocket. Lysine 454 contributes to the (6S)-5-formyl-5,6,7,8-tetrahydrofolate binding site.

Belongs to the TRAFAC class TrmE-Era-EngA-EngB-Septin-like GTPase superfamily. TrmE GTPase family. Homodimer. Heterotetramer of two MnmE and two MnmG subunits. K(+) is required as a cofactor.

It localises to the cytoplasm. In terms of biological role, exhibits a very high intrinsic GTPase hydrolysis rate. Involved in the addition of a carboxymethylaminomethyl (cmnm) group at the wobble position (U34) of certain tRNAs, forming tRNA-cmnm(5)s(2)U34. The sequence is that of tRNA modification GTPase MnmE from Salmonella gallinarum (strain 287/91 / NCTC 13346).